The primary structure comprises 180 residues: Endoribonuclease YbeY (180 aa).

The Zn(2+) site is built by histidine 118, histidine 122, and histidine 128.

It belongs to the endoribonuclease YbeY family. Zn(2+) serves as cofactor.

The protein resides in the cytoplasm. Functionally, single strand-specific metallo-endoribonuclease involved in late-stage 70S ribosome quality control and in maturation of the 3' terminus of the 16S rRNA. The polypeptide is Endoribonuclease YbeY (Rhodococcus erythropolis (strain PR4 / NBRC 100887)).